A 391-amino-acid chain; its full sequence is 3-demethoxyubiquinol 3-hydroxylase (391 aa).

It belongs to the UbiH/COQ6 family. Component of the Ubi complex metabolon, which regroups five ubiquinone biosynthesis proteins (UbiE, UbiF, UbiG, UbiH and UbiI) and two accessory factors (UbiK and the lipid-binding protein UbiJ). The cofactor is FAD.

It localises to the cytoplasm. The catalysed reaction is a 5-methoxy-2-methyl-3-(all-trans-polyprenyl)benzene-1,4-diol + AH2 + O2 = a 3-demethylubiquinol + A + H2O. It functions in the pathway cofactor biosynthesis; ubiquinone biosynthesis. In terms of biological role, catalyzes the hydroxylation of 2-octaprenyl-3-methyl-6-methoxy-1,4-benzoquinol during ubiquinone biosynthesis. The protein is 3-demethoxyubiquinol 3-hydroxylase (ubiF) of Escherichia coli (strain K12).